Consider the following 195-residue polypeptide: MRTAELKRETKETKIDIQLNLDGTGESSIQTGVGFFDHMLTLLAFHSQMDLHVKVEGDTWVDAHHTVEDVGIALGQLIVKSLGDKVGIRRYGSSYMPMDETLARAVIDVSGRPFLVYQADIRNPKLGDFDTELAEEFFRAVAMNGRLTLHLAVLYGSNSHHMIEGLFKAFGRALAEAVSSDGTNRLPSTKGWIEG.

The protein belongs to the imidazoleglycerol-phosphate dehydratase family.

The protein resides in the cytoplasm. It carries out the reaction D-erythro-1-(imidazol-4-yl)glycerol 3-phosphate = 3-(imidazol-4-yl)-2-oxopropyl phosphate + H2O. The protein operates within amino-acid biosynthesis; L-histidine biosynthesis; L-histidine from 5-phospho-alpha-D-ribose 1-diphosphate: step 6/9. This Exiguobacterium sp. (strain ATCC BAA-1283 / AT1b) protein is Imidazoleglycerol-phosphate dehydratase.